A 298-amino-acid polypeptide reads, in one-letter code: Max-like protein X (298 aa).

The interval 1–63 is disordered; it reads MTEPGASPED…PRGCREDSSH (63 aa). At S7 the chain carries Phosphoserine. Positions 28 to 37 are enriched in basic residues; sequence GRARARRGAG. Phosphoserine is present on residues S45, S48, S74, S77, and S98. A disordered region spans residues 91 to 145; the sequence is SVVSRANSIGSTSASSVPNTDDEDSDYHQEAYKESYKDRRRRAHTQAEQKRRDAI. Residues 94–109 show a composition bias toward polar residues; the sequence is SRANSIGSTSASSVPN. 2 stretches are compositionally biased toward basic and acidic residues: residues 116–127 and 135–145; these read DYHQEAYKESYK and TQAEQKRRDAI. In terms of domain architecture, bHLH spans 129–187; that stretch reads RRRRAHTQAEQKRRDAIKRGYDDLQTIVPTCQQQDFSIGSQKLSKAIVLQKTIDYIQFL. The tract at residues 140–160 is leucine-zipper; that stretch reads KRRDAIKRGYDDLQTIVPTCQ.

Efficient DNA binding requires dimerization with another bHLH protein. Binds DNA as a heterodimer with MAD1, MAD4, MNT, WBSCR14 and MLXIP. Can also bind DNA as a homodimer. In terms of tissue distribution, expressed in all tissues tested, including spleen, thymus, prostate, ovary, intestine, colon, peripheral blood leukocyte, heart, liver, skeletal muscle and kidney. Lower levels of expression in testis, brain, placenta and lung.

Its subcellular location is the cytoplasm. It localises to the nucleus. In terms of biological role, transcription regulator. Forms a sequence-specific DNA-binding protein complex with MAD1, MAD4, MNT, WBSCR14 and MLXIP which recognizes the core sequence 5'-CACGTG-3'. The TCFL4-MAD1, TCFL4-MAD4, TCFL4-WBSCR14 complexes are transcriptional repressors. Plays a role in transcriptional activation of glycolytic target genes. Involved in glucose-responsive gene regulation. This chain is Max-like protein X (MLX), found in Homo sapiens (Human).